The following is a 244-amino-acid chain: uncharacterized protein (244 aa).

The segment at 30 to 49 (RETNESPKSQNPSEEATTVN) is disordered. The span at 35-49 (SPKSQNPSEEATTVN) shows a compositional bias: polar residues. Transmembrane regions (helical) follow at residues 96 to 116 (LWGT…LSNS), 128 to 148 (LLFI…FGLF), 171 to 191 (GFFI…TIAF), and 194 to 214 (FVTI…HPLS). The tract at residues 224 to 244 (QLDGSGERKTDSSLVHQNPPN) is disordered. Residues 235–244 (SSLVHQNPPN) show a composition bias toward polar residues.

It is found in the nucleus membrane. This is an uncharacterized protein from Schizosaccharomyces pombe (strain 972 / ATCC 24843) (Fission yeast).